A 46-amino-acid chain; its full sequence is Large ribosomal subunit protein bL36 (46 aa).

The protein belongs to the bacterial ribosomal protein bL36 family.

This chain is Large ribosomal subunit protein bL36, found in Escherichia coli O7:K1 (strain IAI39 / ExPEC).